Reading from the N-terminus, the 295-residue chain is Ribosomal protein L11 methyltransferase (295 aa).

Residues Thr138, Gly161, Asp183, and Asn230 each contribute to the S-adenosyl-L-methionine site.

It belongs to the methyltransferase superfamily. PrmA family.

It localises to the cytoplasm. It carries out the reaction L-lysyl-[protein] + 3 S-adenosyl-L-methionine = N(6),N(6),N(6)-trimethyl-L-lysyl-[protein] + 3 S-adenosyl-L-homocysteine + 3 H(+). Methylates ribosomal protein L11. The polypeptide is Ribosomal protein L11 methyltransferase (Bradyrhizobium diazoefficiens (strain JCM 10833 / BCRC 13528 / IAM 13628 / NBRC 14792 / USDA 110)).